Consider the following 277-residue polypeptide: Phosphate import ATP-binding protein PstB 1 (277 aa).

In terms of domain architecture, ABC transporter spans 27–272 (LRVRDLAVSY…PSHELTAAYI (246 aa)). 59-66 (GPSGCGKT) contacts ATP.

Belongs to the ABC transporter superfamily. Phosphate importer (TC 3.A.1.7) family. The complex is composed of two ATP-binding proteins (PstB), two transmembrane proteins (PstC and PstA) and a solute-binding protein (PstS).

It is found in the cell inner membrane. The catalysed reaction is phosphate(out) + ATP + H2O = ADP + 2 phosphate(in) + H(+). Part of the ABC transporter complex PstSACB involved in phosphate import. Responsible for energy coupling to the transport system. In Nitrosococcus oceani (strain ATCC 19707 / BCRC 17464 / JCM 30415 / NCIMB 11848 / C-107), this protein is Phosphate import ATP-binding protein PstB 1.